The primary structure comprises 1118 residues: Sodium-driven chloride bicarbonate exchanger (1118 aa).

Disordered regions lie at residues 1–23 (MEIK…EEAV), 58–96 (GRKS…DTPS), 245–312 (KQSE…PPHQ), and 457–476 (NGTA…GPEL). Topologically, residues 1-509 (MEIKDQGAQM…DFRDAFSLQC (509 aa)) are cytoplasmic. The segment covering 59-76 (RKSHRRHRHRGHKHRKRD) has biased composition (basic residues). The segment covering 77–90 (RERDSGLEDGRESP) has biased composition (basic and acidic residues). S89 carries the phosphoserine modification. Residue T94 is modified to Phosphothreonine. A compositionally biased stretch (polar residues) spans 248-264 (EPNSMDKNAGQVVSPQS). Phosphoserine is present on S276. The chain crosses the membrane as a helical span at residues 510 to 530 (LASFLFLYCACMSPVITFGGL). The Extracellular portion of the chain corresponds to 531-538 (LGEATEGR). Residues 539–559 (ISAIESLFGASMTGIAYSLFG) form a helical membrane-spanning segment. Over 560 to 562 (GQP) the chain is Cytoplasmic. The chain crosses the membrane as a helical span at residues 563–583 (LTILGSTGPVLVFEKILFKFC). At 584–596 (KEYGLSYLSLRAS) the chain is on the extracellular side. A helical membrane pass occupies residues 597 to 617 (IGLWTATLCIILVATDASSLV). Over 618–626 (CYITRFTEE) the chain is Cytoplasmic. The chain crosses the membrane as a helical span at residues 627 to 647 (AFASLICIIFIYEALEKLFEL). Over 648 to 720 (SEAYPINMHN…VGRACGHDHP (73 aa)) the chain is Extracellular. N-linked (GlcNAc...) asparagine glycans are attached at residues N674, N677, N687, and N697. A helical transmembrane segment spans residues 721-741 (YVPDVLFWSVILFFSTVTLSA). Residues 742 to 762 (TLKQFKTSRYFPTKVRSIVSD) are Cytoplasmic-facing. A helical transmembrane segment spans residues 763–783 (FAVFLTILCMVLIDYAIGIPS). Over 784–809 (PKLQVPSVFKPTRDDRGWFVTPLGPN) the chain is Extracellular. Residues 810-830 (PWWTVIAAIIPALLCTILIFM) traverse the membrane as a helical segment. Residues 831-855 (DQQITAVIINRKEHKLKKGCGYHLD) are Cytoplasmic-facing. A helical transmembrane segment spans residues 856-876 (LLMVAVMLGVCSIMGLPWFVA). Over 877 to 912 (ATVLSITHVNSLKLESECSAPGEQPKFLGIREQRVT) the chain is Extracellular. Residues 913–933 (GLMIFILMGSSVFMTSILKFI) traverse the membrane as a helical segment. Residues 934–935 (PM) lie on the Cytoplasmic side of the membrane. A helical membrane pass occupies residues 936-956 (PVLYGVFLYMGASSLKGIQFF). Over 957–998 (DRIKLFWMPAKHQPDFIYLRHVPLRKVHLFTIIQMSCLGLLW) the chain is Extracellular. The helical transmembrane segment at 999 to 1019 (IIKVSRAAIVFPMMVLALVFV) threads the bilayer. At 1020-1118 (RKLMDLLFTK…SSFPSKSSPS (99 aa)) the chain is on the cytoplasmic side. S1057 and S1085 each carry phosphoserine.

The protein belongs to the anion exchanger (TC 2.A.31) family. Predominantly expressed in the brain.

It localises to the basolateral cell membrane. The protein resides in the apical cell membrane. Its subcellular location is the cell projection. It is found in the dendrite. The protein localises to the axon. It localises to the perikaryon. The protein resides in the presynapse. Its subcellular location is the postsynapse. It catalyses the reaction 2 hydrogencarbonate(out) + chloride(in) + Na(+)(out) = 2 hydrogencarbonate(in) + chloride(out) + Na(+)(in). In terms of biological role, sodium/bicarbonate cotransporter which plays an important role in regulating intracellular pH. Has been shown to act as a sodium/bicarbonate cotransporter in exchange for intracellular chloride. Has also been shown to act as a sodium/biocarbonate cotransporter which does not couple net influx of bicarbonate to net efflux of chloride, with the observed chloride efflux being due to chloride self-exchange. Controls neuronal pH and may contribute to the secretion of cerebrospinal fluid. Acting on presynaptic intracellular pH, it promotes GABA release, reduces the excitability of CA1 pyramidal neurons, and modulates short-term synaptic plasticity. Required in retinal cells to maintain normal pH which is necessary for normal vision. In the kidney, likely to mediate bicarbonate reclamation in the apical membrane of the proximal tubules. The sequence is that of Sodium-driven chloride bicarbonate exchanger from Homo sapiens (Human).